Here is a 132-residue protein sequence, read N- to C-terminus: Small ribosomal subunit protein uS8 (132 aa).

The protein belongs to the universal ribosomal protein uS8 family. In terms of assembly, part of the 30S ribosomal subunit. Contacts proteins S5 and S12.

Its function is as follows. One of the primary rRNA binding proteins, it binds directly to 16S rRNA central domain where it helps coordinate assembly of the platform of the 30S subunit. This chain is Small ribosomal subunit protein uS8, found in Anaeromyxobacter dehalogenans (strain 2CP-C).